We begin with the raw amino-acid sequence, 230 residues long: Flagellar L-ring protein (230 aa).

The N-terminal stretch at 1–22 (MSPLSNFARTALACAVAALLGG) is a signal peptide. Cys23 is lipidated: N-palmitoyl cysteine. Cys23 is lipidated: S-diacylglycerol cysteine.

Belongs to the FlgH family. The basal body constitutes a major portion of the flagellar organelle and consists of four rings (L,P,S, and M) mounted on a central rod.

It localises to the cell outer membrane. The protein resides in the bacterial flagellum basal body. Functionally, assembles around the rod to form the L-ring and probably protects the motor/basal body from shearing forces during rotation. The protein is Flagellar L-ring protein of Stenotrophomonas maltophilia (strain R551-3).